Here is a 160-residue protein sequence, read N- to C-terminus: Thy-1 membrane glycoprotein (160 aa).

A signal peptide spans 1-19 (MNPTVSIAVILTVLQAAHC). Residue Gln-20 is modified to Pyrrolidone carboxylic acid. Residues 20 to 120 (QMIRDLSACL…YTGNQIKNIT (101 aa)) form the Ig-like V-type domain. Disulfide bonds link Cys-28/Cys-129 and Cys-38/Cys-103. N-linked (GlcNAc...) asparagine glycosylation is found at Asn-42, Asn-78, and Asn-118. The GPI-anchor amidated cysteine moiety is linked to residue Cys-129. The propeptide at 130–160 (VRLSLLIQNTSWLLLLLLSLPLLQAVDFVSL) is removed in mature form. Asn-138 carries N-linked (GlcNAc...) asparagine glycosylation.

Post-translationally, the N-terminus is blocked. As to expression, forebrain, cerebellum and tectum.

It is found in the cell membrane. May play a role in cell-cell or cell-ligand interactions during synaptogenesis and other events in the brain. The chain is Thy-1 membrane glycoprotein (THY1) from Gallus gallus (Chicken).